The sequence spans 150 residues: UPF0735 ACT domain-containing protein Csac_0995 (150 aa).

In terms of domain architecture, ACT spans 72–147 (TLALVLQDVP…GVKKIEILGR (76 aa)).

The protein belongs to the UPF0735 family.

This is UPF0735 ACT domain-containing protein Csac_0995 from Caldicellulosiruptor saccharolyticus (strain ATCC 43494 / DSM 8903 / Tp8T 6331).